A 196-amino-acid chain; its full sequence is SAGA-associated factor 11 homolog (196 aa).

The tract at residues M1–T22 is disordered. The SGF11-type zinc finger occupies C106–C127. The tract at residues R141–F196 is disordered. S172 carries the post-translational modification Phosphoserine. Residues N180–F196 show a composition bias toward low complexity.

The protein belongs to the SGF11 family. In terms of assembly, component of some SAGA transcription coactivator-HAT complexes, at least composed of Ada2b, not/nonstop, Pcaf/Gcn5, Sgf11 and Spt3. Within the SAGA complex, Sgf11, e(y)2, and not/nonstop form an additional subcomplex of SAGA called the DUB module (deubiquitination module). Interacts directly with not/nonstop. Interacts with the AMEX complex component xmas-2. Interacts with Cbp80; important for promoter recruitment of Sgf11 that is not associated with the DUB module.

It is found in the nucleus. It localises to the nucleoplasm. The protein resides in the cytoplasm. Component of the transcription regulatory histone acetylation (HAT) complex SAGA, a multiprotein complex that activates transcription by remodeling chromatin and mediating histone acetylation and deubiquitination. Within the SAGA complex, participates in a subcomplex that specifically deubiquitinates histone H2B. The SAGA complex is recruited to specific gene promoters by activators, where it is required for transcription. Required for nuclear receptor-mediated transactivation. Binds independently on SAGA to promoters in an RNA-dependent manner. Binds to mRNA and is essential for total mRNA export from the nucleus. Required to counteract heterochromatin silencing. Controls the development of neuronal connectivity in visual system by being required for accurate axon targeting in the optic lobe. Required for expression of ecdysone-induced genes such as br/broad. In Drosophila simulans (Fruit fly), this protein is SAGA-associated factor 11 homolog.